The chain runs to 36 residues: Photosystem II reaction center protein M (36 aa).

The helical transmembrane segment at 7–27 threads the bilayer; that stretch reads GFVASLMFVLVPTVFLIVLFI.

The protein belongs to the PsbM family. In terms of assembly, PSII is composed of 1 copy each of membrane proteins PsbA, PsbB, PsbC, PsbD, PsbE, PsbF, PsbH, PsbI, PsbJ, PsbK, PsbL, PsbM, PsbT, PsbX, PsbY, PsbZ, Psb30/Ycf12, peripheral proteins PsbO, CyanoQ (PsbQ), PsbU, PsbV and a large number of cofactors. It forms dimeric complexes.

It is found in the cellular thylakoid membrane. Its function is as follows. One of the components of the core complex of photosystem II (PSII). PSII is a light-driven water:plastoquinone oxidoreductase that uses light energy to abstract electrons from H(2)O, generating O(2) and a proton gradient subsequently used for ATP formation. It consists of a core antenna complex that captures photons, and an electron transfer chain that converts photonic excitation into a charge separation. This subunit is found at the monomer-monomer interface. In Synechococcus sp. (strain CC9311), this protein is Photosystem II reaction center protein M.